The sequence spans 142 residues: Large ribosomal subunit protein uL13 (142 aa).

Belongs to the universal ribosomal protein uL13 family. Part of the 50S ribosomal subunit.

In terms of biological role, this protein is one of the early assembly proteins of the 50S ribosomal subunit, although it is not seen to bind rRNA by itself. It is important during the early stages of 50S assembly. In Actinobacillus succinogenes (strain ATCC 55618 / DSM 22257 / CCUG 43843 / 130Z), this protein is Large ribosomal subunit protein uL13.